A 200-amino-acid polypeptide reads, in one-letter code: Diadenylate cyclase (200 aa).

Residues Ile-5–Ala-25 traverse the membrane as a helical segment. A DAC domain is found at Asn-28 to Asn-185.

It belongs to the adenylate cyclase family. DacB/CdaS subfamily. As to quaternary structure, probably oligomerizes.

Its subcellular location is the cell membrane. It carries out the reaction 2 ATP = 3',3'-c-di-AMP + 2 diphosphate. In terms of biological role, catalyzes the condensation of 2 ATP molecules into cyclic di-AMP (c-di-AMP), a second messenger used to regulate differing processes in different bacteria. In Mycoplasma genitalium (strain ATCC 33530 / DSM 19775 / NCTC 10195 / G37) (Mycoplasmoides genitalium), this protein is Diadenylate cyclase.